Consider the following 320-residue polypeptide: Acetyl-coenzyme A carboxylase carboxyl transferase subunit alpha (320 aa).

Residues 33 to 294 enclose the CoA carboxyltransferase C-terminal domain; that stretch reads AFDTEIQALR…GDAVEDELKA (262 aa).

This sequence belongs to the AccA family. As to quaternary structure, acetyl-CoA carboxylase is a heterohexamer composed of biotin carboxyl carrier protein (AccB), biotin carboxylase (AccC) and two subunits each of ACCase subunit alpha (AccA) and ACCase subunit beta (AccD).

Its subcellular location is the cytoplasm. It catalyses the reaction N(6)-carboxybiotinyl-L-lysyl-[protein] + acetyl-CoA = N(6)-biotinyl-L-lysyl-[protein] + malonyl-CoA. The protein operates within lipid metabolism; malonyl-CoA biosynthesis; malonyl-CoA from acetyl-CoA: step 1/1. Its function is as follows. Component of the acetyl coenzyme A carboxylase (ACC) complex. First, biotin carboxylase catalyzes the carboxylation of biotin on its carrier protein (BCCP) and then the CO(2) group is transferred by the carboxyltransferase to acetyl-CoA to form malonyl-CoA. In Caulobacter vibrioides (strain ATCC 19089 / CIP 103742 / CB 15) (Caulobacter crescentus), this protein is Acetyl-coenzyme A carboxylase carboxyl transferase subunit alpha.